The primary structure comprises 188 residues: Elongation factor P (188 aa).

N6-(3,6-diaminohexanoyl)-5-hydroxylysine is present on lysine 34.

It belongs to the elongation factor P family. May be beta-lysylated on the epsilon-amino group of Lys-34 by the combined action of EpmA and EpmB, and then hydroxylated on the C5 position of the same residue by EpmC (if this protein is present). Lysylation is critical for the stimulatory effect of EF-P on peptide-bond formation. The lysylation moiety may extend toward the peptidyltransferase center and stabilize the terminal 3-CCA end of the tRNA. Hydroxylation of the C5 position on Lys-34 may allow additional potential stabilizing hydrogen-bond interactions with the P-tRNA.

Its subcellular location is the cytoplasm. The protein operates within protein biosynthesis; polypeptide chain elongation. Functionally, involved in peptide bond synthesis. Alleviates ribosome stalling that occurs when 3 or more consecutive Pro residues or the sequence PPG is present in a protein, possibly by augmenting the peptidyl transferase activity of the ribosome. Modification of Lys-34 is required for alleviation. This chain is Elongation factor P, found in Cronobacter sakazakii (strain ATCC BAA-894) (Enterobacter sakazakii).